The sequence spans 301 residues: Small ribosomal subunit protein uS2 (301 aa).

This sequence belongs to the universal ribosomal protein uS2 family. In terms of assembly, component of the small ribosomal subunit. Mature ribosomes consist of a small (40S) and a large (60S) subunit. The 40S subunit contains about 33 different proteins and 1 molecule of RNA (18S). The 60S subunit contains about 49 different proteins and 3 molecules of RNA (25S, 5.8S and 5S). Interacts with RPS21.

It is found in the cytoplasm. Its function is as follows. Required for the assembly and/or stability of the 40S ribosomal subunit. Required for the processing of the 20S rRNA-precursor to mature 18S rRNA in a late step of the maturation of 40S ribosomal subunits. This chain is Small ribosomal subunit protein uS2, found in Ajellomyces dermatitidis (strain ER-3 / ATCC MYA-2586) (Blastomyces dermatitidis).